Consider the following 115-residue polypeptide: MNPLIQSLTEGQLRTDIPSFRPGDTVRVHAKVVEGNRERIQIFEGVVIARKGAGISENYTVRKISNGVGVERIFPIHTPRVEKIEVVRYGKVRRAKLYYLRALQGKAARIKEIRR.

This sequence belongs to the bacterial ribosomal protein bL19 family.

In terms of biological role, this protein is located at the 30S-50S ribosomal subunit interface and may play a role in the structure and function of the aminoacyl-tRNA binding site. This is Large ribosomal subunit protein bL19 from Streptococcus pneumoniae (strain JJA).